The sequence spans 159 residues: Deoxyuridine 5'-triphosphate nucleotidohydrolase (159 aa).

Substrate-binding positions include 78 to 80 (RSG), Asn91, 95 to 97 (LID), and Met105.

Belongs to the dUTPase family. It depends on Mg(2+) as a cofactor.

The enzyme catalyses dUTP + H2O = dUMP + diphosphate + H(+). Its pathway is pyrimidine metabolism; dUMP biosynthesis; dUMP from dCTP (dUTP route): step 2/2. This enzyme is involved in nucleotide metabolism: it produces dUMP, the immediate precursor of thymidine nucleotides and it decreases the intracellular concentration of dUTP so that uracil cannot be incorporated into DNA. This is Deoxyuridine 5'-triphosphate nucleotidohydrolase from Buchnera aphidicola subsp. Schizaphis graminum (strain Sg).